We begin with the raw amino-acid sequence, 379 residues long: tRNA(Met) cytidine acetate ligase (379 aa).

ATP is bound by residues 7–20, glycine 100, asparagine 153, and arginine 178; that span reads ITEY…HQYH.

It belongs to the TmcAL family.

The protein resides in the cytoplasm. The catalysed reaction is cytidine(34) in elongator tRNA(Met) + acetate + ATP = N(4)-acetylcytidine(34) in elongator tRNA(Met) + AMP + diphosphate. Its function is as follows. Catalyzes the formation of N(4)-acetylcytidine (ac(4)C) at the wobble position of elongator tRNA(Met), using acetate and ATP as substrates. First activates an acetate ion to form acetyladenylate (Ac-AMP) and then transfers the acetyl group to tRNA to form ac(4)C34. This Staphylococcus aureus (strain MRSA252) protein is tRNA(Met) cytidine acetate ligase.